We begin with the raw amino-acid sequence, 141 residues long: Large ribosomal subunit protein uL11 (141 aa).

This sequence belongs to the universal ribosomal protein uL11 family. Part of the ribosomal stalk of the 50S ribosomal subunit. Interacts with L10 and the large rRNA to form the base of the stalk. L10 forms an elongated spine to which L12 dimers bind in a sequential fashion forming a multimeric L10(L12)X complex. In terms of processing, one or more lysine residues are methylated.

In terms of biological role, forms part of the ribosomal stalk which helps the ribosome interact with GTP-bound translation factors. This chain is Large ribosomal subunit protein uL11, found in Crocosphaera subtropica (strain ATCC 51142 / BH68) (Cyanothece sp. (strain ATCC 51142)).